The sequence spans 337 residues: Ribosomal RNA small subunit methyltransferase H (337 aa).

S-adenosyl-L-methionine-binding positions include 45–47 (GGH), Asp64, Phe91, Asp120, and Gln127.

The protein belongs to the methyltransferase superfamily. RsmH family.

It is found in the cytoplasm. The enzyme catalyses cytidine(1402) in 16S rRNA + S-adenosyl-L-methionine = N(4)-methylcytidine(1402) in 16S rRNA + S-adenosyl-L-homocysteine + H(+). Specifically methylates the N4 position of cytidine in position 1402 (C1402) of 16S rRNA. The sequence is that of Ribosomal RNA small subunit methyltransferase H from Corynebacterium glutamicum (strain ATCC 13032 / DSM 20300 / JCM 1318 / BCRC 11384 / CCUG 27702 / LMG 3730 / NBRC 12168 / NCIMB 10025 / NRRL B-2784 / 534).